A 977-amino-acid polypeptide reads, in one-letter code: Structural protein ORF43 (977 aa).

Residues 531–556 (DNDNINKQQQQQRERNDDDDDDDDST) are disordered.

Belongs to the ascovirus HvAV ORF146 family.

It is found in the virion. This chain is Structural protein ORF43, found in Noctuidae (owlet moths).